The primary structure comprises 131 residues: Large ribosomal subunit protein bL19 (131 aa).

Residues G107–E131 form a disordered region. Residues R111–K124 are compositionally biased toward basic and acidic residues.

Belongs to the bacterial ribosomal protein bL19 family.

In terms of biological role, this protein is located at the 30S-50S ribosomal subunit interface and may play a role in the structure and function of the aminoacyl-tRNA binding site. The polypeptide is Large ribosomal subunit protein bL19 (Methylobacterium sp. (strain 4-46)).